A 1232-amino-acid polypeptide reads, in one-letter code: Anion exchange protein 3 (1232 aa).

Residues 1 to 11 (MANGVIPPPGG) are compositionally biased toward pro residues. Disordered stretches follow at residues 1-316 (MANG…KLDR) and 429-499 (NDDK…DSHR). Residues 1–708 (MANGVIPPPG…DLRDALHSQC (708 aa)) are Cytoplasmic-facing. The span at 58 to 75 (DPEKPSRSYSERDFEFHR) shows a compositional bias: basic and acidic residues. Composition is skewed to basic residues over residues 76 to 97 (HTSH…KLRR) and 104 to 113 (RHTRRKRKKE). Residues 134-152 (VDEEEEEEEEEEGESEAEP) show a composition bias toward acidic residues. Residues Ser-167, Ser-170, Ser-175, and Ser-198 each carry the phosphoserine modification. The span at 267-279 (DDMKSHRLEDNPG) shows a compositional bias: basic and acidic residues. Basic residues predominate over residues 280 to 289 (VRRHLVKKPS). Arg-295 bears the Omega-N-methylarginine mark. The segment covering 305–316 (LRRKKKKKKLDR) has biased composition (basic residues). The span at 440 to 450 (NPSSSSMNSVL) shows a compositional bias: polar residues. Basic and acidic residues predominate over residues 481–499 (HDPDAKEKPLHMPGGDSHR). 5 helical membrane passes run 709–731 (VAAV…GLLG), 737–774 (LMGV…LLVF), 794–816 (VWVG…SFLV), 826–847 (IFAF…YKVF), and 893–910 (ALLS…AFFL). The membrane (anion exchange) stretch occupies residues 709 to 1232 (VAAVLFIYFA…DEYNELHMPV (524 aa)). Residues 911-925 (RKFRNSRFLGGKARR) are Cytoplasmic-facing. Transmembrane regions (helical) follow at residues 926 to 946 (IIGD…DYSI), 980 to 1002 (PFPP…LIFM), 1028 to 1049 (LLLI…LTAA), 1083 to 1128 (VTGV…IQLS), and 1155 to 1191 (MHLF…TVPL). Cys-1165 is lipidated: S-palmitoyl cysteine.

It belongs to the anion exchanger (TC 2.A.31) family.

The protein localises to the cell membrane. The enzyme catalyses hydrogencarbonate(in) + chloride(out) = hydrogencarbonate(out) + chloride(in). Its function is as follows. Sodium-independent anion exchanger which mediates the electroneutral exchange of chloride for bicarbonate ions across the cell membrane. May be involved in the regulation of intracellular pH, and the modulation of cardiac action potential. This is Anion exchange protein 3 (SLC4A3) from Plecturocebus moloch (Dusky titi monkey).